A 26-amino-acid polypeptide reads, in one-letter code: Coenzyme PQQ synthesis protein A (26 aa).

Residues 16–20 constitute a cross-link (pyrroloquinoline quinone (Glu-Tyr)); the sequence is EINMY.

The protein belongs to the PqqA family.

The protein operates within cofactor biosynthesis; pyrroloquinoline quinone biosynthesis. Functionally, required for coenzyme pyrroloquinoline quinone (PQQ) biosynthesis. PQQ is probably formed by cross-linking a specific glutamate to a specific tyrosine residue and excising these residues from the peptide. The chain is Coenzyme PQQ synthesis protein A from Cereibacter sphaeroides (strain ATCC 17029 / ATH 2.4.9) (Rhodobacter sphaeroides).